A 954-amino-acid polypeptide reads, in one-letter code: E3 ubiquitin-protein ligase arkadia (954 aa).

The span at 50–66 (LCSDTNKQQRDLNSNGT) shows a compositional bias: polar residues. Disordered regions lie at residues 50 to 175 (LCSD…VSSL) and 193 to 276 (RKRF…SGGM). Composition is skewed to low complexity over residues 112 to 131 (SSFSDCISSPSSSSHFGDSD) and 232 to 251 (SSSSSSENDLSSESSSSSST). The SUMO interaction motif 1 (SIM) signature appears at 280–284 (VVVIE). Positions 305-311 (EVEIVTV) match the SUMO interaction motif 2 (SIM) motif. 3 disordered regions span residues 318–346 (RTTLGHPRSHWGQNTQSGRTQEQRTRNRV), 364–452 (TVDE…MPRL), and 485–509 (HFPHHHHHHHQSSHPGVPLSPSFRD). Over residues 328–337 (WGQNTQSGRT) the composition is skewed to polar residues. The SUMO interaction motif 3 (SIM) motif lies at 360–364 (VVDLT). The span at 385-395 (VSTVSSNTSTS) shows a compositional bias: low complexity. Residues 485 to 496 (HFPHHHHHHHQS) are compositionally biased toward basic residues. The tract at residues 867–869 (YPH) is ubiquitin binding. Zn(2+)-binding residues include Cys-902 and Cys-905. Residues 902 to 943 (CTICLSILEEGEDVRRLPCMHLFHQVCVDQWLITNKKCPICR) form an RING-type; atypical zinc finger. The interval 917-921 (RLPCM) is ubiquitin binding. Residues His-925 and Cys-928 each contribute to the Zn(2+) site.

Belongs to the Arkadia family. As to quaternary structure, monomer.

The protein localises to the nucleus. The protein resides in the cytoplasm. It localises to the PML body. It carries out the reaction S-ubiquitinyl-[E2 ubiquitin-conjugating enzyme]-L-cysteine + [acceptor protein]-L-lysine = [E2 ubiquitin-conjugating enzyme]-L-cysteine + N(6)-ubiquitinyl-[acceptor protein]-L-lysine.. The protein operates within protein modification; protein ubiquitination. With respect to regulation, binds free ubiquitin non-covalently via its RING-type zinc finger. Ubiquitin-binding leads to enhance the E3 ubiquitin-protein ligase activity by stabilizing the ubiquitin-conjugating enzyme E2 (donor ubiquitin) in the 'closed' conformation and activating ubiquitin transfer. Its function is as follows. E3 ubiquitin-protein ligase required for mesoderm patterning during embryonic development. Acts as an enhancer of the transcriptional responses of the smad2/smad3 effectors, which are activated downstream of BMP. Acts by mediating ubiquitination and degradation of SMAD inhibitors such as smad7, inducing their proteasomal degradation and thereby enhancing the transcriptional activity of TGF-beta and BMP. Specifically binds polysumoylated chains via SUMO interaction motifs (SIMs) and mediates ubiquitination of sumoylated substrates. The regulation of the BMP-SMAD signaling is however independent of sumoylation and is not dependent of SUMO interaction motifs (SIMs). This Xenopus tropicalis (Western clawed frog) protein is E3 ubiquitin-protein ligase arkadia (rnf111).